A 66-amino-acid chain; its full sequence is Large ribosomal subunit protein uL29 (66 aa).

This sequence belongs to the universal ribosomal protein uL29 family.

This is Large ribosomal subunit protein uL29 from Bacillus licheniformis (strain ATCC 14580 / DSM 13 / JCM 2505 / CCUG 7422 / NBRC 12200 / NCIMB 9375 / NCTC 10341 / NRRL NRS-1264 / Gibson 46).